Here is a 304-residue protein sequence, read N- to C-terminus: Cell surface-binding protein OPG105 (304 aa).

The Alpha-carbonic anhydrase domain occupies 1-235; the sequence is MPQQLSPINI…NDDTQVYYSG (235 aa). Topologically, residues 1-275 are virion surface; that stretch reads MPQQLSPINI…YQKYIEENKT (275 aa). The chain crosses the membrane as a helical span at residues 276–294; sequence FAIIAIVFVFILTAILFFM. Over 295-304 the chain is Intravirion; it reads SRRYSREKQN.

Belongs to the alpha-carbonic anhydrase family. Homodimer; disulfide-linked. Apparently non-glycosylated.

The protein localises to the virion membrane. Its function is as follows. Binds to chondroitin sulfate on the cell surface to provide virion attachment to target cell. This Homo sapiens (Human) protein is Cell surface-binding protein OPG105 (OPG105).